The chain runs to 75 residues: Metallothionein-like protein 1 (75 aa).

Belongs to the metallothionein superfamily. Type 15 family.

Functionally, metallothioneins have a high content of cysteine residues that bind various heavy metals. In Triticum aestivum (Wheat), this protein is Metallothionein-like protein 1 (ALI1).